The sequence spans 737 residues: Protein kinase C epsilon type (737 aa).

In terms of domain architecture, C2 spans 1–117 (MVVFNGLLKI…NGSRHFEDWI (117 aa)). At serine 62 the chain carries Phosphoserine. Residues 169-220 (GHKFMATYLRQPTYCSHCRDFIWGVIGKQGYQCQVCTCVVHKRCHELIITKC) form a Phorbol-ester/DAG-type 1 zinc finger. Residues 223–228 (LKKQET) carry the Interaction with actin motif. Threonine 228 carries the post-translational modification Phosphothreonine. Residue serine 234 is modified to Phosphoserine. The Phorbol-ester/DAG-type 2 zinc-finger motif lies at 242–292 (PHKFGIHNYKVPTFCDHCGSLLWGLLRQGLQCKVCKMNVHRRCETNVAPNC). Threonine 309 is modified (phosphothreonine). Residues 310–356 (PDKITNSGQRRKKLAAGAESPQPASGNSPSEDDRSKSAPTSPCDQEL) form a disordered region. 4 positions are modified to phosphoserine: serine 316, serine 329, serine 337, and serine 346. A Phosphothreonine modification is found at threonine 349. Residue serine 350 is modified to Phosphoserine; by MAPK11 and MAPK14. Phosphoserine occurs at positions 368 and 388. The disordered stretch occupies residues 369–398 (FDNRGEEHRASSSTDGQLASPGENGEVRQG). Residues 408–668 (FNFIKVLGKG…EDAIKQHPFF (261 aa)) enclose the Protein kinase domain. Residues 414 to 422 (LGKGSFGKV) and lysine 437 each bind ATP. Aspartate 532 functions as the Proton acceptor in the catalytic mechanism. Threonine 566 is subject to Phosphothreonine; by PDPK1. The region spanning 669 to 737 (KEIDWVLLEQ…FSYFGEDLMP (69 aa)) is the AGC-kinase C-terminal domain. Threonine 703 and threonine 710 each carry phosphothreonine. A Phosphoserine modification is found at serine 729.

This sequence belongs to the protein kinase superfamily. AGC Ser/Thr protein kinase family. PKC subfamily. Forms a ternary complex with TRIM63 and RACK1/GN2BL1. Can form a complex with PDLIM5 and N-type calcium channel. Interacts with COPB1. Interacts with DGKQ. Interacts with STAT3. Interacts with YWHAB. Interacts with HSP90AB1; promotes functional activation in a heat shock-dependent manner. Interacts (via phorbol-ester/DAG-type 2 domain) with PRPH and VIM. Interacts with NLRP5/MATER. Post-translationally, phosphorylation on Thr-566 by PDPK1 triggers autophosphorylation on Ser-729. Phosphorylation in the hinge domain at Ser-350 by MAPK11 or MAPK14, Ser-346 by GSK3B and Ser-368 by autophosphorylation is required for interaction with YWHAB. In response to growth factors, phosphorylated at Thr-703 and Ser-729 by the mTORC2 complex, promoting autophosphorylation and activation of PRKCE.

The protein localises to the cytoplasm. Its subcellular location is the cytoskeleton. It is found in the cell membrane. It localises to the perinuclear region. The protein resides in the nucleus. It catalyses the reaction L-seryl-[protein] + ATP = O-phospho-L-seryl-[protein] + ADP + H(+). The catalysed reaction is L-threonyl-[protein] + ATP = O-phospho-L-threonyl-[protein] + ADP + H(+). Its activity is regulated as follows. Novel PKCs (PRKCD, PRKCE, PRKCH and PRKCQ) are calcium-insensitive, but activated by diacylglycerol (DAG) and phosphatidylserine. Three specific sites; Thr-566 (activation loop of the kinase domain), Thr-710 (turn motif) and Ser-729 (hydrophobic region), need to be phosphorylated for its full activation. Calcium-independent, phospholipid- and diacylglycerol (DAG)-dependent serine/threonine-protein kinase that plays essential roles in the regulation of multiple cellular processes linked to cytoskeletal proteins, such as cell adhesion, motility, migration and cell cycle, functions in neuron growth and ion channel regulation, and is involved in immune response, cancer cell invasion and regulation of apoptosis. Mediates cell adhesion to the extracellular matrix via integrin-dependent signaling, by mediating angiotensin-2-induced activation of integrin beta-1 (ITGB1) in cardiac fibroblasts. Phosphorylates MARCKS, which phosphorylates and activates PTK2/FAK, leading to the spread of cardiomyocytes. Involved in the control of the directional transport of ITGB1 in mesenchymal cells by phosphorylating vimentin (VIM), an intermediate filament (IF) protein. In epithelial cells, associates with and phosphorylates keratin-8 (KRT8), which induces targeting of desmoplakin at desmosomes and regulates cell-cell contact. Phosphorylates IQGAP1, which binds to CDC42, mediating epithelial cell-cell detachment prior to migration. During cytokinesis, forms a complex with YWHAB, which is crucial for daughter cell separation, and facilitates abscission by a mechanism which may implicate the regulation of RHOA. In cardiac myocytes, regulates myofilament function and excitation coupling at the Z-lines, where it is indirectly associated with F-actin via interaction with COPB1. During endothelin-induced cardiomyocyte hypertrophy, mediates activation of PTK2/FAK, which is critical for cardiomyocyte survival and regulation of sarcomere length. Plays a role in the pathogenesis of dilated cardiomyopathy via persistent phosphorylation of troponin I (TNNI3). Involved in nerve growth factor (NFG)-induced neurite outgrowth and neuron morphological change independently of its kinase activity, by inhibition of RHOA pathway, activation of CDC42 and cytoskeletal rearrangement. May be involved in presynaptic facilitation by mediating phorbol ester-induced synaptic potentiation. Phosphorylates gamma-aminobutyric acid receptor subunit gamma-2 (GABRG2), which reduces the response of GABA receptors to ethanol and benzodiazepines and may mediate acute tolerance to the intoxicating effects of ethanol. Upon PMA treatment, phosphorylates the capsaicin- and heat-activated cation channel TRPV1, which is required for bradykinin-induced sensitization of the heat response in nociceptive neurons. Is able to form a complex with PDLIM5 and N-type calcium channel, and may enhance channel activities and potentiates fast synaptic transmission by phosphorylating the pore-forming alpha subunit CACNA1B (CaV2.2). Downstream of TLR4, plays an important role in the lipopolysaccharide (LPS)-induced immune response by phosphorylating and activating TICAM2/TRAM, which in turn activates the transcription factor IRF3 and subsequent cytokines production. In differentiating erythroid progenitors, is regulated by EPO and controls the protection against the TNFSF10/TRAIL-mediated apoptosis, via BCL2. May be involved in the regulation of the insulin-induced phosphorylation and activation of AKT1. Phosphorylates NLRP5/MATER and may thereby modulate AKT pathway activation in cumulus cells. Phosphorylates and activates LRRK1, which phosphorylates RAB proteins involved in intracellular trafficking. The protein is Protein kinase C epsilon type (Prkce) of Rattus norvegicus (Rat).